Consider the following 393-residue polypeptide: Phosphoglycerate kinase (393 aa).

Substrate-binding positions include 21–23, R37, 60–63, R119, and R152; these read DFN and HLGR. ATP is bound by residues K202, G291, E322, and 348–351; that span reads GGDT.

Belongs to the phosphoglycerate kinase family. Monomer.

The protein resides in the cytoplasm. The catalysed reaction is (2R)-3-phosphoglycerate + ATP = (2R)-3-phospho-glyceroyl phosphate + ADP. Its pathway is carbohydrate degradation; glycolysis; pyruvate from D-glyceraldehyde 3-phosphate: step 2/5. This Coprothermobacter proteolyticus (strain ATCC 35245 / DSM 5265 / OCM 4 / BT) protein is Phosphoglycerate kinase.